We begin with the raw amino-acid sequence, 299 residues long: Epimerase family protein SH2119 (299 aa).

It belongs to the NAD(P)-dependent epimerase/dehydratase family. SDR39U1 subfamily.

The sequence is that of Epimerase family protein SH2119 from Staphylococcus haemolyticus (strain JCSC1435).